A 297-amino-acid chain; its full sequence is Homoserine kinase (297 aa).

82 to 92 (PLTRGLGSSAS) is an ATP binding site.

The protein belongs to the GHMP kinase family. Homoserine kinase subfamily.

The protein localises to the cytoplasm. It carries out the reaction L-homoserine + ATP = O-phospho-L-homoserine + ADP + H(+). It participates in amino-acid biosynthesis; L-threonine biosynthesis; L-threonine from L-aspartate: step 4/5. Functionally, catalyzes the ATP-dependent phosphorylation of L-homoserine to L-homoserine phosphate. The protein is Homoserine kinase of Bacillus cereus (strain ATCC 14579 / DSM 31 / CCUG 7414 / JCM 2152 / NBRC 15305 / NCIMB 9373 / NCTC 2599 / NRRL B-3711).